The following is a 779-amino-acid chain: uncharacterized protein (779 aa).

2 positions are modified to phosphoserine: Ser-97 and Ser-120. Basic and acidic residues predominate over residues 125-135 (EIDGEDEKKSV). Residues 125–174 (EIDGEDEKKSVGQESITGSAKRKDRRSKTNGSKRQKAEANREPPSDISLS) are disordered. Over residues 144-158 (AKRKDRRSKTNGSKR) the composition is skewed to basic residues. A compositionally biased stretch (basic and acidic residues) spans 159-168 (QKAEANREPP). ATP-binding positions include 215–222 (GPPGCGKT) and 533–540 (GPPGCGKT). Positions 759-779 (DRQKYQRLAKRWSSASTNDAD) are disordered.

It belongs to the AAA ATPase family.

Its subcellular location is the nucleus. This is an uncharacterized protein from Schizosaccharomyces pombe (strain 972 / ATCC 24843) (Fission yeast).